Consider the following 305-residue polypeptide: Cytochrome c biogenesis protein CcsA (305 aa).

8 consecutive transmembrane segments (helical) span residues Val-4–Trp-24, Ser-32–Leu-52, Gly-58–Leu-78, Ile-91–Leu-111, Val-136–Val-156, Thr-212–Asn-232, Thr-246–Leu-263, and Val-275–Ile-295.

Belongs to the CcmF/CycK/Ccl1/NrfE/CcsA family. As to quaternary structure, may interact with ccs1.

It localises to the cellular thylakoid membrane. Functionally, required during biogenesis of c-type cytochromes (cytochrome c6 and cytochrome f) at the step of heme attachment. The sequence is that of Cytochrome c biogenesis protein CcsA from Synechococcus sp. (strain CC9311).